The chain runs to 701 residues: Elongation factor G (701 aa).

Residues 8–290 enclose the tr-type G domain; it reads SLYRNIGISA…AVVELLPAPT (283 aa). GTP is bound by residues 17-24, 88-92, and 142-145; these read AHIDAGKT, DTPGH, and NKMD.

This sequence belongs to the TRAFAC class translation factor GTPase superfamily. Classic translation factor GTPase family. EF-G/EF-2 subfamily.

Its subcellular location is the cytoplasm. Catalyzes the GTP-dependent ribosomal translocation step during translation elongation. During this step, the ribosome changes from the pre-translocational (PRE) to the post-translocational (POST) state as the newly formed A-site-bound peptidyl-tRNA and P-site-bound deacylated tRNA move to the P and E sites, respectively. Catalyzes the coordinated movement of the two tRNA molecules, the mRNA and conformational changes in the ribosome. This Neisseria meningitidis serogroup C (strain 053442) protein is Elongation factor G.